Here is a 104-residue protein sequence, read N- to C-terminus: uncharacterized protein (104 aa).

The next 2 membrane-spanning stretches (helical) occupy residues 47-67 (IDHR…LAML) and 72-92 (VGHV…FVLA).

This sequence to M.leprae ML1584.

Its subcellular location is the cell membrane. This is an uncharacterized protein from Mycobacterium tuberculosis (strain CDC 1551 / Oshkosh).